Here is a 475-residue protein sequence, read N- to C-terminus: Ribulose bisphosphate carboxylase large chain (475 aa).

Positions 1-2 (MS) are excised as a propeptide. P3 carries the N-acetylproline modification. K14 carries the N6,N6,N6-trimethyllysine modification. N123 and T173 together coordinate substrate. K175 serves as the catalytic Proton acceptor. K177 is a binding site for substrate. Residues K201, D203, and E204 each contribute to the Mg(2+) site. At K201 the chain carries N6-carboxylysine. H294 acts as the Proton acceptor in catalysis. Substrate contacts are provided by R295, H327, and S379.

This sequence belongs to the RuBisCO large chain family. Type I subfamily. Heterohexadecamer of 8 large chains and 8 small chains; disulfide-linked. The disulfide link is formed within the large subunit homodimers. It depends on Mg(2+) as a cofactor. Post-translationally, the disulfide bond which can form in the large chain dimeric partners within the hexadecamer appears to be associated with oxidative stress and protein turnover.

Its subcellular location is the plastid. The protein resides in the chloroplast. It catalyses the reaction 2 (2R)-3-phosphoglycerate + 2 H(+) = D-ribulose 1,5-bisphosphate + CO2 + H2O. The catalysed reaction is D-ribulose 1,5-bisphosphate + O2 = 2-phosphoglycolate + (2R)-3-phosphoglycerate + 2 H(+). Its function is as follows. RuBisCO catalyzes two reactions: the carboxylation of D-ribulose 1,5-bisphosphate, the primary event in carbon dioxide fixation, as well as the oxidative fragmentation of the pentose substrate in the photorespiration process. Both reactions occur simultaneously and in competition at the same active site. The chain is Ribulose bisphosphate carboxylase large chain from Chlorokybus atmophyticus (Soil alga).